The primary structure comprises 307 residues: UAP56-interacting factor (307 aa).

Low complexity predominate over residues 1–25 (MSGFGAAALLSGSSAAAGTRSGSSD). Disordered stretches follow at residues 1–28 (MSGF…DSLE) and 41–85 (NKKE…KNHL). A UAP56-binding motif motif is present at residues 26-44 (SLEKIDMSLDDIIKLNKKE). Residues 57–78 (LQQNRTQQFRTPGSKWGIQQQK) are compositionally biased toward polar residues.

This sequence belongs to the UIF family. Widely expressed.

The protein resides in the nucleus. The protein localises to the nucleoplasm. It localises to the nucleus speckle. In terms of biological role, required for mRNA export from the nucleus to the cytoplasm. Acts as an adapter that uses the DDX39B/UAP56-NFX1 pathway to ensure efficient mRNA export and delivering to the nuclear pore. In Gallus gallus (Chicken), this protein is UAP56-interacting factor (FYTTD1).